We begin with the raw amino-acid sequence, 488 residues long: Glutamyl-tRNA(Gln) amidotransferase subunit A (488 aa).

Active-site charge relay system residues include lysine 77 and serine 152. Serine 176 functions as the Acyl-ester intermediate in the catalytic mechanism.

This sequence belongs to the amidase family. GatA subfamily. As to quaternary structure, heterotrimer of A, B and C subunits.

The catalysed reaction is L-glutamyl-tRNA(Gln) + L-glutamine + ATP + H2O = L-glutaminyl-tRNA(Gln) + L-glutamate + ADP + phosphate + H(+). Allows the formation of correctly charged Gln-tRNA(Gln) through the transamidation of misacylated Glu-tRNA(Gln) in organisms which lack glutaminyl-tRNA synthetase. The reaction takes place in the presence of glutamine and ATP through an activated gamma-phospho-Glu-tRNA(Gln). In Streptococcus uberis (strain ATCC BAA-854 / 0140J), this protein is Glutamyl-tRNA(Gln) amidotransferase subunit A.